The primary structure comprises 404 residues: Probable tRNA sulfurtransferase (404 aa).

Residues 60-165 (TAVAESLKQV…EEAAYLSYET (106 aa)) form the THUMP domain. ATP is bound by residues 183 to 184 (ML), 208 to 209 (HF), Arg265, Gly287, and Gln296.

It belongs to the ThiI family.

It is found in the cytoplasm. It catalyses the reaction [ThiI sulfur-carrier protein]-S-sulfanyl-L-cysteine + a uridine in tRNA + 2 reduced [2Fe-2S]-[ferredoxin] + ATP + H(+) = [ThiI sulfur-carrier protein]-L-cysteine + a 4-thiouridine in tRNA + 2 oxidized [2Fe-2S]-[ferredoxin] + AMP + diphosphate. The enzyme catalyses [ThiS sulfur-carrier protein]-C-terminal Gly-Gly-AMP + S-sulfanyl-L-cysteinyl-[cysteine desulfurase] + AH2 = [ThiS sulfur-carrier protein]-C-terminal-Gly-aminoethanethioate + L-cysteinyl-[cysteine desulfurase] + A + AMP + 2 H(+). It participates in cofactor biosynthesis; thiamine diphosphate biosynthesis. Its function is as follows. Catalyzes the ATP-dependent transfer of a sulfur to tRNA to produce 4-thiouridine in position 8 of tRNAs, which functions as a near-UV photosensor. Also catalyzes the transfer of sulfur to the sulfur carrier protein ThiS, forming ThiS-thiocarboxylate. This is a step in the synthesis of thiazole, in the thiamine biosynthesis pathway. The sulfur is donated as persulfide by IscS. The sequence is that of Probable tRNA sulfurtransferase from Streptococcus pneumoniae (strain ATCC 700669 / Spain 23F-1).